Consider the following 322-residue polypeptide: tRNA U34 carboxymethyltransferase (322 aa).

Positions 91, 105, 110, 129, 195, 199, and 314 each coordinate carboxy-S-adenosyl-L-methionine.

This sequence belongs to the class I-like SAM-binding methyltransferase superfamily. CmoB family. In terms of assembly, homotetramer.

It catalyses the reaction carboxy-S-adenosyl-L-methionine + 5-hydroxyuridine(34) in tRNA = 5-carboxymethoxyuridine(34) in tRNA + S-adenosyl-L-homocysteine + H(+). Catalyzes carboxymethyl transfer from carboxy-S-adenosyl-L-methionine (Cx-SAM) to 5-hydroxyuridine (ho5U) to form 5-carboxymethoxyuridine (cmo5U) at position 34 in tRNAs. This is tRNA U34 carboxymethyltransferase from Ectopseudomonas mendocina (strain ymp) (Pseudomonas mendocina).